A 506-amino-acid polypeptide reads, in one-letter code: NAD(P)H-quinone oxidoreductase subunit 2, chloroplastic (506 aa).

The next 13 helical transmembrane spans lie at 15-35 (LIPE…DLVY), 39-59 (CHAW…VLLG), 84-104 (LSLV…LLSI), 113-133 (APSE…LVAG), 137-157 (LLMM…LTGY), 172-192 (LLVG…MYGI), 217-237 (CALA…AAPF), 249-269 (PTPV…ILAV), 283-303 (WHLI…FIAV), 339-359 (IVYL…VILF), 382-402 (ALCL…AGFF), 418-438 (SLVW…LSVV), and 471-491 (VGIF…NSMV).

Belongs to the complex I subunit 2 family. In terms of assembly, NDH is composed of at least 16 different subunits, 5 of which are encoded in the nucleus.

The protein localises to the plastid. The protein resides in the chloroplast thylakoid membrane. It catalyses the reaction a plastoquinone + NADH + (n+1) H(+)(in) = a plastoquinol + NAD(+) + n H(+)(out). The enzyme catalyses a plastoquinone + NADPH + (n+1) H(+)(in) = a plastoquinol + NADP(+) + n H(+)(out). Its function is as follows. NDH shuttles electrons from NAD(P)H:plastoquinone, via FMN and iron-sulfur (Fe-S) centers, to quinones in the photosynthetic chain and possibly in a chloroplast respiratory chain. The immediate electron acceptor for the enzyme in this species is believed to be plastoquinone. Couples the redox reaction to proton translocation, and thus conserves the redox energy in a proton gradient. In Nephroselmis olivacea (Green alga), this protein is NAD(P)H-quinone oxidoreductase subunit 2, chloroplastic.